Reading from the N-terminus, the 601-residue chain is Pyranose 2-oxidase (601 aa).

Histidine 151 carries the post-translational modification Tele-8alpha-FAD histidine. Substrate is bound by residues glutamine 406 and histidine 408. Histidine 505 acts as the Proton acceptor in catalysis. The active site involves asparagine 558. The interval 577–601 (KLGKKGSHSGNRDDGDVDTDTDDDA) is disordered. Acidic residues predominate over residues 591 to 601 (GDVDTDTDDDA).

This sequence belongs to the GMC oxidoreductase family. As to quaternary structure, homotetramer. It depends on FAD as a cofactor.

The catalysed reaction is D-glucose + O2 = 2-dehydro-D-glucose + H2O2. Catalyzes the oxidation of various aldopyranoses and disaccharides on carbon-2 to the corresponding 2-keto sugars concomitant with the reduction of O(2) to H(2)O(2). The protein is Pyranose 2-oxidase (p2ox) of Emericella nidulans (strain FGSC A4 / ATCC 38163 / CBS 112.46 / NRRL 194 / M139) (Aspergillus nidulans).